A 461-amino-acid polypeptide reads, in one-letter code: Phytase PHO112 (461 aa).

Cystine bridges form between C62–C384, C261–C274, and C404–C412. R72, H73, R76, and S79 together coordinate 1D-myo-inositol hexakisphosphate. H73 acts as the Nucleophile in catalysis. 2 N-linked (GlcNAc...) asparagine glycosylation sites follow: N97 and N157. R169 contacts 1D-myo-inositol hexakisphosphate. N-linked (GlcNAc...) asparagine glycosylation is found at N229 and N248. 1D-myo-inositol hexakisphosphate is bound at residue K293. N-linked (GlcNAc...) asparagine glycosylation is found at N302 and N313. 1D-myo-inositol hexakisphosphate contacts are provided by H334 and D335. 2 N-linked (GlcNAc...) asparagine glycosylation sites follow: N437 and N452.

The protein belongs to the histidine acid phosphatase family. As to quaternary structure, monomer.

The protein localises to the secreted. The catalysed reaction is 1D-myo-inositol hexakisphosphate + H2O = 1D-myo-inositol 1,2,4,5,6-pentakisphosphate + phosphate. It catalyses the reaction 1D-myo-inositol 1,2,4,5,6-pentakisphosphate + H2O = 1D-myo-inositol 1,2,5,6-tetrakisphosphate + phosphate. The enzyme catalyses 1D-myo-inositol 1,2,5,6-tetrakisphosphate + H2O = 1D-myo-inositol 1,2,6-trisphosphate + phosphate. It carries out the reaction 1D-myo-inositol 1,2,6-trisphosphate + H2O = 1D-myo-inositol 1,2-bisphosphate + phosphate. The catalysed reaction is 1D-myo-inositol 1,2-bisphosphate + H2O = 1D-myo-inositol 2-phosphate + phosphate. Catalyzes the phosphate monoester hydrolysis of phytic acid (myo-inositol hexakisphosphate), which results in the stepwise formation of myo-inositol pentakis-, tetrakis-, tris-, bis-, and monophosphates, as well as the liberation of inorganic phosphate. Myo-inositol 2-monophosphate is the end product. Responsible of about 25% of the phytase activity. The residual phytase activity might be contributed by other cytosolic or cellular enzymes such as acid phosphatase that also degraded the substrate phytate. Is essential for human tissue damage during infection. This Candida albicans (strain SC5314 / ATCC MYA-2876) (Yeast) protein is Phytase PHO112 (PHO112).